The following is a 228-amino-acid chain: Triosephosphate isomerase (228 aa).

9–11 serves as a coordination point for substrate; the sequence is NFK. Residue His-93 is the Electrophile of the active site. Glu-141 acts as the Proton acceptor in catalysis. Substrate-binding positions include Ile-146, Gly-180, and 201–202; that span reads AS.

It belongs to the triosephosphate isomerase family. Homotetramer; dimer of dimers.

Its subcellular location is the cytoplasm. It catalyses the reaction D-glyceraldehyde 3-phosphate = dihydroxyacetone phosphate. It functions in the pathway carbohydrate biosynthesis; gluconeogenesis. It participates in carbohydrate degradation; glycolysis; D-glyceraldehyde 3-phosphate from glycerone phosphate: step 1/1. Functionally, involved in the gluconeogenesis. Catalyzes stereospecifically the conversion of dihydroxyacetone phosphate (DHAP) to D-glyceraldehyde-3-phosphate (G3P). The sequence is that of Triosephosphate isomerase from Metallosphaera sedula (strain ATCC 51363 / DSM 5348 / JCM 9185 / NBRC 15509 / TH2).